Consider the following 108-residue polypeptide: Translation initiation factor 1A (108 aa).

An S1-like domain is found at 11–85 (PSRDVPKPEE…NRCDILYKYG (75 aa)).

This sequence belongs to the eIF-1A family.

In terms of biological role, seems to be required for maximal rate of protein biosynthesis. Enhances ribosome dissociation into subunits and stabilizes the binding of the initiator Met-tRNA(I) to 40 S ribosomal subunits. The polypeptide is Translation initiation factor 1A (eIF1A) (Saccharolobus islandicus (strain Y.N.15.51 / Yellowstone #2) (Sulfolobus islandicus)).